We begin with the raw amino-acid sequence, 119 residues long: Large ribosomal subunit protein uL18 (119 aa).

The protein belongs to the universal ribosomal protein uL18 family. Part of the 50S ribosomal subunit; part of the 5S rRNA/L5/L18/L25 subcomplex. Contacts the 5S and 23S rRNAs.

In terms of biological role, this is one of the proteins that bind and probably mediate the attachment of the 5S RNA into the large ribosomal subunit, where it forms part of the central protuberance. The chain is Large ribosomal subunit protein uL18 from Cupriavidus taiwanensis (strain DSM 17343 / BCRC 17206 / CCUG 44338 / CIP 107171 / LMG 19424 / R1) (Ralstonia taiwanensis (strain LMG 19424)).